A 373-amino-acid chain; its full sequence is Glutamate 5-kinase 2 (373 aa).

Lys-11 is an ATP binding site. Substrate contacts are provided by Ser-51, Asp-138, and Asn-150. Residues 170–171 and 212–218 each bind ATP; these read SD and TGGMKSK. The 77-residue stretch at 279 to 355 folds into the PUA domain; the sequence is EGDIVVHNES…TNQETAASSQ (77 aa).

Belongs to the glutamate 5-kinase family.

It is found in the cytoplasm. It carries out the reaction L-glutamate + ATP = L-glutamyl 5-phosphate + ADP. It functions in the pathway amino-acid biosynthesis; L-proline biosynthesis; L-glutamate 5-semialdehyde from L-glutamate: step 1/2. In terms of biological role, catalyzes the transfer of a phosphate group to glutamate to form L-glutamate 5-phosphate. The chain is Glutamate 5-kinase 2 from Bacillus licheniformis (strain ATCC 14580 / DSM 13 / JCM 2505 / CCUG 7422 / NBRC 12200 / NCIMB 9375 / NCTC 10341 / NRRL NRS-1264 / Gibson 46).